A 522-amino-acid chain; its full sequence is Glucans biosynthesis protein G (522 aa).

Positions 1–33 are cleaved as a signal peptide; sequence MLDNKFGFKQRVASLRWLSAAIMLSVSAVPAWA.

It belongs to the OpgD/OpgG family.

The protein localises to the periplasm. It functions in the pathway glycan metabolism; osmoregulated periplasmic glucan (OPG) biosynthesis. Involved in the biosynthesis of osmoregulated periplasmic glucans (OPGs). This chain is Glucans biosynthesis protein G, found in Pectobacterium atrosepticum (strain SCRI 1043 / ATCC BAA-672) (Erwinia carotovora subsp. atroseptica).